We begin with the raw amino-acid sequence, 456 residues long: MLDYTPCEEVTREAVTINPAKTCQPIGAVYAALGVHNCMPHSHGSQGCLSYLRMCLSRHYREAALATTSSFSEGTAVFGVSANLKEALVNLTTIYKPEVIAIHTTCVAETIGDDVGVILEDVEAEELIDPSIKICAASTPSYVGSHITGYDNMVKSFVTTFTKKSKPNGKLNIIPGFVEPGDIREIKRILSIMEISSIVFPDTTDVFGAPLTGEPGMYPKGGTPIGDIEDSANSVGTIALCRMAGGSAAKILEGRYKVPAKIGPTPIGIRNTDRFVMNAAKLANVAIPPELEDERGRLVDMMTDAHPHYHGKKVAIYGDPDILTGLTSLVMEMGMEPVVVLTGTKSSEFEKEVEGLIGPEHPEADVISGGDMFTLHQIIKRKPVDLLIGNTYGKFISRAEDVPLVRVGFPIMDRANLHYFPIMGYAGAARLVERIANTLLDRKDRDAPDWLLETIQ.

[8Fe-7S] cluster-binding residues include cysteine 23, cysteine 48, cysteine 106, and serine 141.

This sequence belongs to the NifD/NifK/NifE/NifN family. As to quaternary structure, tetramer of two alpha and two beta chains. Forms complex with the iron protein (nitrogenase component 2). [8Fe-7S] cluster serves as cofactor.

It carries out the reaction N2 + 8 reduced [2Fe-2S]-[ferredoxin] + 16 ATP + 16 H2O = H2 + 8 oxidized [2Fe-2S]-[ferredoxin] + 2 NH4(+) + 16 ADP + 16 phosphate + 6 H(+). Its function is as follows. This molybdenum-iron protein is part of the nitrogenase complex that catalyzes the key enzymatic reactions in nitrogen fixation. This Methanosarcina barkeri protein is Nitrogenase molybdenum-iron protein beta chain (nifK2).